Reading from the N-terminus, the 129-residue chain is M-zodatoxin-Lt8l (129 aa).

An N-terminal signal peptide occupies residues 1–20 (MKYFVVXXALVAAFACIAES). The propeptide occupies 21–60 (KPAESEHELAEVEEENELADLEDAVWLEDLADLSDLEETR).

It belongs to the cationic peptide 06 (cytoinsectotoxin) family. Expressed by the venom gland.

The protein localises to the secreted. Insecticidal, cytolytic and antimicrobial peptide. Forms voltage-dependent, ion-permeable channels in membranes. At high concentration causes cell membrane lysis. The polypeptide is M-zodatoxin-Lt8l (cit 1-12) (Lachesana tarabaevi (Spider)).